A 303-amino-acid chain; its full sequence is GTPase Era (303 aa).

The Era-type G domain maps to 7-176 (KSGFVAIIGR…LDNVVSHLDE (170 aa)). Positions 15–22 (GRPNVGKS) are G1. 15–22 (GRPNVGKS) is a binding site for GTP. Residues 41 to 45 (QTTRN) are G2. Residues 62 to 65 (DTPG) form a G3 region. GTP contacts are provided by residues 62–66 (DTPGV) and 125–128 (NKVD). The tract at residues 125–128 (NKVD) is G4. Residues 155 to 157 (ISA) are G5. The region spanning 207-284 (TRQEVPHSVA…FLETWVKVEP (78 aa)) is the KH type-2 domain.

It belongs to the TRAFAC class TrmE-Era-EngA-EngB-Septin-like GTPase superfamily. Era GTPase family. As to quaternary structure, monomer.

The protein resides in the cytoplasm. The protein localises to the cell membrane. An essential GTPase that binds both GDP and GTP, with rapid nucleotide exchange. Plays a role in 16S rRNA processing and 30S ribosomal subunit biogenesis and possibly also in cell cycle regulation and energy metabolism. This chain is GTPase Era, found in Leuconostoc citreum (strain KM20).